We begin with the raw amino-acid sequence, 61 residues long: Large ribosomal subunit protein eL20 (61 aa).

It belongs to the eukaryotic ribosomal protein eL20 family. As to quaternary structure, part of the 50S ribosomal subunit. Binds 23S rRNA.

The polypeptide is Large ribosomal subunit protein eL20 (Methanosarcina acetivorans (strain ATCC 35395 / DSM 2834 / JCM 12185 / C2A)).